Here is a 492-residue protein sequence, read N- to C-terminus: 5-taurinomethyluridine-[tRNA] synthase subunit GTPB3, mitochondrial (492 aa).

A mitochondrion-targeting transit peptide spans 1–20; the sequence is MWRGLSALVTRPASAPLRLC. 3 residues coordinate 5,10-methylenetetrahydrofolate: R52, E112, and K152. In terms of domain architecture, TrmE-type G spans 249 to 416; the sequence is GANVVVAGPP…LLQALKTELA (168 aa). GTP is bound by residues 256-263, 282-286, 303-306, and 374-377; these read GPPNAGKS, GTTRD, DTAG, and NKSD. N259 serves as a coordination point for K(+). 2 residues coordinate Mg(2+): S263 and T284. Residue K492 coordinates 5,10-methylenetetrahydrofolate.

This sequence belongs to the TRAFAC class TrmE-Era-EngA-EngB-Septin-like GTPase superfamily. TrmE GTPase family. As to quaternary structure, homodimer; forms a dimer in the presence of potassium. Interacts with MTO1; forms the GTPBP3-MTO1 complex composed of homodimers of GTPBP3 and MTO1. It depends on K(+) as a cofactor.

It is found in the mitochondrion. The catalysed reaction is GTP + H2O = GDP + phosphate + H(+). Its function is as follows. GTPase component of the GTPBP3-MTO1 complex that catalyzes the 5-taurinomethyluridine (taum(5)U) modification at the 34th wobble position (U34) of mitochondrial tRNAs (mt-tRNAs), which plays a role in mt-tRNA decoding and mitochondrial translation. Taum(5)U formation on mammalian mt-tRNA requires the presence of both GTPBP3-mediated GTPase activity and MTO1 catalytic activity. The chain is 5-taurinomethyluridine-[tRNA] synthase subunit GTPB3, mitochondrial from Rattus norvegicus (Rat).